The primary structure comprises 90 residues: Probable Fe(2+)-trafficking protein (90 aa).

The protein belongs to the Fe(2+)-trafficking protein family.

Functionally, could be a mediator in iron transactions between iron acquisition and iron-requiring processes, such as synthesis and/or repair of Fe-S clusters in biosynthetic enzymes. The protein is Probable Fe(2+)-trafficking protein of Koribacter versatilis (strain Ellin345).